The sequence spans 309 residues: Ribonuclease Z (309 aa).

Zn(2+) is bound by residues His63, His65, Asp67, His68, His145, Asp216, and His274. Asp67 functions as the Proton acceptor in the catalytic mechanism.

It belongs to the RNase Z family. As to quaternary structure, homodimer. Requires Zn(2+) as cofactor.

It carries out the reaction Endonucleolytic cleavage of RNA, removing extra 3' nucleotides from tRNA precursor, generating 3' termini of tRNAs. A 3'-hydroxy group is left at the tRNA terminus and a 5'-phosphoryl group is left at the trailer molecule.. Functionally, zinc phosphodiesterase, which displays some tRNA 3'-processing endonuclease activity. Probably involved in tRNA maturation, by removing a 3'-trailer from precursor tRNA. The protein is Ribonuclease Z of Streptococcus equi subsp. equi (strain 4047).